Reading from the N-terminus, the 762-residue chain is Polyribonucleotide nucleotidyltransferase (762 aa).

2 residues coordinate Mg(2+): aspartate 531 and aspartate 537. The 60-residue stretch at 597–656 (PRVTTIKVPVDKIGEVIGPKGKVINSITEETGAQISIEDDGTVFVGATDGPSAQAAIDKI) folds into the KH domain. The region spanning 668–737 (GERFLGTVVK…KRGKISLVLV (70 aa)) is the S1 motif domain.

This sequence belongs to the polyribonucleotide nucleotidyltransferase family. It depends on Mg(2+) as a cofactor.

The protein localises to the cytoplasm. The enzyme catalyses RNA(n+1) + phosphate = RNA(n) + a ribonucleoside 5'-diphosphate. Functionally, involved in mRNA degradation. Catalyzes the phosphorolysis of single-stranded polyribonucleotides processively in the 3'- to 5'-direction. In Mycobacterium marinum (strain ATCC BAA-535 / M), this protein is Polyribonucleotide nucleotidyltransferase.